The following is an 870-amino-acid chain: Alanine--tRNA ligase (870 aa).

The Zn(2+) site is built by histidine 585, histidine 589, cysteine 689, and histidine 693.

The protein belongs to the class-II aminoacyl-tRNA synthetase family. Requires Zn(2+) as cofactor.

Its subcellular location is the cytoplasm. It catalyses the reaction tRNA(Ala) + L-alanine + ATP = L-alanyl-tRNA(Ala) + AMP + diphosphate. In terms of biological role, catalyzes the attachment of alanine to tRNA(Ala) in a two-step reaction: alanine is first activated by ATP to form Ala-AMP and then transferred to the acceptor end of tRNA(Ala). Also edits incorrectly charged Ser-tRNA(Ala) and Gly-tRNA(Ala) via its editing domain. The chain is Alanine--tRNA ligase from Picrophilus torridus (strain ATCC 700027 / DSM 9790 / JCM 10055 / NBRC 100828 / KAW 2/3).